The sequence spans 305 residues: Ribonuclease BN (305 aa).

Zn(2+)-binding residues include His-64, His-66, Asp-68, His-69, His-141, Asp-212, and His-270. Catalysis depends on Asp-68, which acts as the Proton acceptor.

It belongs to the RNase Z family. RNase BN subfamily. In terms of assembly, homodimer. Zn(2+) is required as a cofactor.

Zinc phosphodiesterase, which has both exoribonuclease and endoribonuclease activities. This Salmonella gallinarum (strain 287/91 / NCTC 13346) protein is Ribonuclease BN.